A 620-amino-acid polypeptide reads, in one-letter code: DNA mismatch repair protein MutL (620 aa).

The tract at residues 332-402 is disordered; it reads SELGLEAQPE…YRTPLRPATH (71 aa). Residues 352–365 are compositionally biased toward low complexity; it reads SNSTNSNVSSTSYS. Residues 378 to 394 are compositionally biased toward polar residues; sequence PLTTTATSYNQGQSSYR.

The protein belongs to the DNA mismatch repair MutL/HexB family.

Its function is as follows. This protein is involved in the repair of mismatches in DNA. It is required for dam-dependent methyl-directed DNA mismatch repair. May act as a 'molecular matchmaker', a protein that promotes the formation of a stable complex between two or more DNA-binding proteins in an ATP-dependent manner without itself being part of a final effector complex. The protein is DNA mismatch repair protein MutL of Shewanella piezotolerans (strain WP3 / JCM 13877).